The primary structure comprises 249 residues: Seipin homolog (249 aa).

At 1 to 10 (MGYLVKLFKL) the chain is on the cytoplasmic side. Residues 11–31 (VVWMLVIGLFSIPSLVSYVIF) traverse the membrane as a helical segment. Over 32–212 (YDTVIPHSVI…GMRWFMYTHK (181 aa)) the chain is Lumenal. Residues 213-233 (VSAFLVFTSLFWFTGITSTII) form a helical membrane-spanning segment. Over 234–249 (TYLIVSSTSETKATRR) the chain is Cytoplasmic.

It belongs to the seipin family.

The protein resides in the endoplasmic reticulum membrane. Functionally, involved in lipid metabolism and lipid droplet (LD) morphology, number, and size. Facilitates initiation of LD formation, and ensures that vectorial budding of LDs from the ER is directed towards the cytoplasm. The polypeptide is Seipin homolog (Schizosaccharomyces pombe (strain 972 / ATCC 24843) (Fission yeast)).